The chain runs to 185 residues: Adenine phosphoribosyltransferase (185 aa).

It belongs to the purine/pyrimidine phosphoribosyltransferase family. As to quaternary structure, homodimer.

It localises to the cytoplasm. The catalysed reaction is AMP + diphosphate = 5-phospho-alpha-D-ribose 1-diphosphate + adenine. It participates in purine metabolism; AMP biosynthesis via salvage pathway; AMP from adenine: step 1/1. In terms of biological role, catalyzes a salvage reaction resulting in the formation of AMP, that is energically less costly than de novo synthesis. The protein is Adenine phosphoribosyltransferase of Nocardioides sp. (strain ATCC BAA-499 / JS614).